We begin with the raw amino-acid sequence, 734 residues long: Photosystem I P700 chlorophyll a apoprotein A2 (734 aa).

The next 8 membrane-spanning stretches (helical) occupy residues 46 to 69 (IFASHFGQLAIIFLWTSGNLFHVA), 135 to 158 (LYTGSLFLLGLAAVALVAGWLHLQ), 175 to 199 (LNHHLSGLFGVSSLAWTGHLIHVAI), 273 to 291 (IAHHHLAIAVLFIVAGHMY), 330 to 353 (LHFQLGLALACLGVITSLVAQHIY), 369 to 395 (AALYTHHQYIAGFIMTGAFAHGAIFFI), 417 to 439 (AIISHLSWASLFLGFHTLGLYVH), and 517 to 535 (FLVHHAIALGLHTTTLILV). [4Fe-4S] cluster-binding residues include Cys559 and Cys568. The next 2 helical transmembrane spans lie at 575–596 (AFYLAVFWMLNTIGWVTFYWHW) and 643–665 (LSVWAWMFLFGHLVWATGFMFLI). Positions 654, 662, and 670 each coordinate chlorophyll a. Trp671 provides a ligand contact to phylloquinone. The chain crosses the membrane as a helical span at residues 707-727 (LVGLAHFSVGYIFTYAAFLIA).

This sequence belongs to the PsaA/PsaB family. The PsaA/B heterodimer binds the P700 chlorophyll special pair and subsequent electron acceptors. PSI consists of a core antenna complex that captures photons, and an electron transfer chain that converts photonic excitation into a charge separation. The eukaryotic PSI reaction center is composed of at least 11 subunits. The cofactor is P700 is a chlorophyll a/chlorophyll a' dimer, A0 is one or more chlorophyll a, A1 is one or both phylloquinones and FX is a shared 4Fe-4S iron-sulfur center..

Its subcellular location is the plastid. The protein resides in the chloroplast thylakoid membrane. The catalysed reaction is reduced [plastocyanin] + hnu + oxidized [2Fe-2S]-[ferredoxin] = oxidized [plastocyanin] + reduced [2Fe-2S]-[ferredoxin]. PsaA and PsaB bind P700, the primary electron donor of photosystem I (PSI), as well as the electron acceptors A0, A1 and FX. PSI is a plastocyanin-ferredoxin oxidoreductase, converting photonic excitation into a charge separation, which transfers an electron from the donor P700 chlorophyll pair to the spectroscopically characterized acceptors A0, A1, FX, FA and FB in turn. Oxidized P700 is reduced on the lumenal side of the thylakoid membrane by plastocyanin. This chain is Photosystem I P700 chlorophyll a apoprotein A2, found in Staurastrum punctulatum (Green alga).